Consider the following 1187-residue polypeptide: Phospholipid-transporting ATPase IH (1187 aa).

The Cytoplasmic segment spans residues 1 to 61; the sequence is MDCSLLRTLV…SSKYTFWNFI (61 aa). A helical transmembrane segment spans residues 62–82; that stretch reads PKNLFEQFRRIANFYFLIIFL. Over 83–88 the chain is Extracellular; the sequence is VQLIID. A helical membrane pass occupies residues 89-110; that stretch reads TPTSPVTSGLPLFFVITVTAIK. The Cytoplasmic portion of the chain corresponds to 111–296; that stretch reads QGYEDWLRHK…SAVEKSMNTF (186 aa). A helical transmembrane segment spans residues 297-318; sequence LIVYLCILVSKALINTVLKYVW. The Extracellular segment spans residues 319–349; the sequence is QSEPFRDEPWYNEKTESERQRNLFLRAFTDF. A helical membrane pass occupies residues 350–372; it reads LAFMVLFNYIIPVSMYVTVEMQK. Topologically, residues 373–884 are cytoplasmic; that stretch reads FLGSYFITWD…GHFYYIRISE (512 aa). Catalysis depends on D414, which acts as the 4-aspartylphosphate intermediate. Residues D414, K415, T416, E513, F555, K578, R609, T689, G690, and D691 each coordinate ATP. D414 serves as a coordination point for Mg(2+). T416 is a binding site for Mg(2+). The residue at position 740 (S740) is a Phosphoserine. R801 and K807 together coordinate ATP. D828 is a Mg(2+) binding site. N831 and D832 together coordinate ATP. Residue D832 coordinates Mg(2+). A helical membrane pass occupies residues 885–905; the sequence is LVQYFFYKNVCFIFPQFLYQF. Topologically, residues 906–917 are extracellular; that stretch reads FCGFSQQTLYDT. The helical transmembrane segment at 918–937 threads the bilayer; sequence AYLTLYNISFTSLPILLYSL. The Cytoplasmic segment spans residues 938-967; the sequence is MEQHVGIDVLKRDPTLYRDIAKNALLRWRV. Residues 968-989 traverse the membrane as a helical segment; that stretch reads FIYWTFLGVFDALVFFFGAYFI. Topologically, residues 990-1003 are extracellular; that stretch reads FENTTVTINGQMFG. A helical membrane pass occupies residues 1004-1026; the sequence is NWTFGTLVFTVMVLTVTLKLALD. Residues 1027–1032 lie on the Cytoplasmic side of the membrane; the sequence is THYWTW. A helical transmembrane segment spans residues 1033-1053; sequence INHFVIWGSLLFYIAFSLLWG. Residues 1054 to 1071 lie on the Extracellular side of the membrane; that stretch reads GVIWPFLSYQRMYYVFIS. A helical transmembrane segment spans residues 1072–1096; it reads MLSSGPAWLGIILLVTVGLLPDVLK. Residues 1097–1138 are Cytoplasmic-facing; it reads KVLCRQLWPTATERTQNIQHQDSISEFTPLASLPSWGAQGSR. Phosphoserine occurs at positions 1148 and 1158.

This sequence belongs to the cation transport ATPase (P-type) (TC 3.A.3) family. Type IV subfamily. In terms of assembly, component of a P4-ATPase flippase complex which consists of a catalytic alpha subunit ATP11A and an accessory beta subunit TMEM30A. Mg(2+) is required as a cofactor. In terms of processing, proteolytically cleaved by CASP3. Widely expressed. Expressed in myoblasts. Expressed in retina, brain, liver, testes and kidney (at protein level). Expressed in the inner ear.

It localises to the cell membrane. It is found in the early endosome. The protein resides in the recycling endosome. Its subcellular location is the endoplasmic reticulum membrane. The enzyme catalyses ATP + H2O + phospholipidSide 1 = ADP + phosphate + phospholipidSide 2.. It catalyses the reaction a 1,2-diacyl-sn-glycero-3-phospho-L-serine(out) + ATP + H2O = a 1,2-diacyl-sn-glycero-3-phospho-L-serine(in) + ADP + phosphate + H(+). The catalysed reaction is a 1,2-diacyl-sn-glycero-3-phosphoethanolamine(out) + ATP + H2O = a 1,2-diacyl-sn-glycero-3-phosphoethanolamine(in) + ADP + phosphate + H(+). Catalytic component of a P4-ATPase flippase complex which catalyzes the hydrolysis of ATP coupled to the transport of aminophospholipids, phosphatidylserines (PS) and phosphatidylethanolamines (PE), from the outer to the inner leaflet of the plasma membrane. Does not show flippase activity toward phosphatidylcholine (PC). Contributes to the maintenance of membrane lipid asymmetry with a specific role in morphogenesis of muscle cells. In myoblasts, mediates PS enrichment at the inner leaflet of plasma membrane, triggering PIEZO1-dependent Ca2+ influx and Rho GTPases signal transduction, subsequently leading to the assembly of cortical actomyosin fibers and myotube formation. This Mus musculus (Mouse) protein is Phospholipid-transporting ATPase IH (Atp11a).